Here is a 322-residue protein sequence, read N- to C-terminus: 2-oxoglutarate-dependent dioxygenase caaD (322 aa).

The 108-residue stretch at 172-279 (TGNAAMFLKL…FAVPAFWHGD (108 aa)) folds into the Fe2OG dioxygenase domain. H200, D202, and H259 together coordinate Fe cation. Residue R269 coordinates 2-oxoglutarate.

Belongs to the iron/ascorbate-dependent oxidoreductase family. Fe(2+) serves as cofactor.

It participates in secondary metabolite biosynthesis. Functionally, 2-oxoglutarate-dependent dioxygenase; part of the gene cluster that produces the acyltetronic acid derivatives carlosic acid, agglomerin F and carlosic acid methyl ether. CaaD catalyzes the sequential oxidations of the terminal C-10 methyl group of the caaC product to form carboxylic acid which is necessary for the biosynthesis of agglomerin F. In Aspergillus niger (strain ATCC MYA-4892 / CBS 513.88 / FGSC A1513), this protein is 2-oxoglutarate-dependent dioxygenase caaD.